The primary structure comprises 60 residues: Cecropin-B1 (60 aa).

An N-terminal signal peptide occupies residues Met1–Ala24.

Belongs to the cecropin family.

It is found in the secreted. In terms of biological role, putative antimicrobial peptide. Partially neutralizes lipopolysaccharides (LPS). Exhibits anti-inflammatory properties: inhibits LPS-induced iNOS/NOS2 transcription, nitric oxide (NO) and pro-inflammatory cytokine production in mouse macrophages and human peripheral blood mononuclear cells (PBMCs); inhibits LPS-induced activation of MAPK and NF-kappa-B signaling pathways in mouse macrophages. This chain is Cecropin-B1, found in Aedes aegypti (Yellowfever mosquito).